A 197-amino-acid polypeptide reads, in one-letter code: MRKKRSAPQKPKLTYRVNEQIRVPEVRVVFKDGSQEILKTGEARKMAEQEGLDLIEVQPTAQPPVCKMDNYGKLQYKLDKNEKDRKKKSKPTELKELRFHPNTDTHDFDFKSAHLEEFLRKGNRVRATIVFLGRSIIYKDKGFELVERLKERLSNVSNPEGEAKFEGKRLFIYFEPDKKKIEIFERQLAKMKPEEKP.

The protein belongs to the IF-3 family. In terms of assembly, monomer.

The protein localises to the cytoplasm. IF-3 binds to the 30S ribosomal subunit and shifts the equilibrium between 70S ribosomes and their 50S and 30S subunits in favor of the free subunits, thus enhancing the availability of 30S subunits on which protein synthesis initiation begins. This Prosthecochloris aestuarii (strain DSM 271 / SK 413) protein is Translation initiation factor IF-3.